Here is a 265-residue protein sequence, read N- to C-terminus: 4-diphosphocytidyl-2-C-methyl-D-erythritol kinase (265 aa).

Lysine 8 is a catalytic residue. 95-105 (PIGAGLGGGSS) contributes to the ATP binding site. Aspartate 135 is an active-site residue.

The protein belongs to the GHMP kinase family. IspE subfamily.

The enzyme catalyses 4-CDP-2-C-methyl-D-erythritol + ATP = 4-CDP-2-C-methyl-D-erythritol 2-phosphate + ADP + H(+). Its pathway is isoprenoid biosynthesis; isopentenyl diphosphate biosynthesis via DXP pathway; isopentenyl diphosphate from 1-deoxy-D-xylulose 5-phosphate: step 3/6. Functionally, catalyzes the phosphorylation of the position 2 hydroxy group of 4-diphosphocytidyl-2C-methyl-D-erythritol. The chain is 4-diphosphocytidyl-2-C-methyl-D-erythritol kinase from Ureaplasma urealyticum serovar 10 (strain ATCC 33699 / Western).